A 78-amino-acid chain; its full sequence is D-alanyl carrier protein (78 aa).

Residues 1–78 enclose the Carrier domain; it reads MEFKNQVYGI…HIAEQLAEMK (78 aa). An O-(pantetheine 4'-phosphoryl)serine modification is found at S36.

It belongs to the DltC family. Post-translationally, 4'-phosphopantetheine is transferred from CoA to a specific serine of apo-DCP.

It localises to the cytoplasm. It functions in the pathway cell wall biogenesis; lipoteichoic acid biosynthesis. Its function is as follows. Carrier protein involved in the D-alanylation of lipoteichoic acid (LTA). The loading of thioester-linked D-alanine onto DltC is catalyzed by D-alanine--D-alanyl carrier protein ligase DltA. The DltC-carried D-alanyl group is further transferred to cell membrane phosphatidylglycerol (PG) by forming an ester bond, probably catalyzed by DltD. D-alanylation of LTA plays an important role in modulating the properties of the cell wall in Gram-positive bacteria, influencing the net charge of the cell wall. The chain is D-alanyl carrier protein from Bacillus pumilus (strain SAFR-032).